A 529-amino-acid chain; its full sequence is Bifunctional purine biosynthesis protein PurH (529 aa).

Positions 1–148 constitute an MGS-like domain; the sequence is MQQRRPVRRA…KNHKDVAIVV (148 aa).

This sequence belongs to the PurH family.

The catalysed reaction is (6R)-10-formyltetrahydrofolate + 5-amino-1-(5-phospho-beta-D-ribosyl)imidazole-4-carboxamide = 5-formamido-1-(5-phospho-D-ribosyl)imidazole-4-carboxamide + (6S)-5,6,7,8-tetrahydrofolate. It catalyses the reaction IMP + H2O = 5-formamido-1-(5-phospho-D-ribosyl)imidazole-4-carboxamide. It functions in the pathway purine metabolism; IMP biosynthesis via de novo pathway; 5-formamido-1-(5-phospho-D-ribosyl)imidazole-4-carboxamide from 5-amino-1-(5-phospho-D-ribosyl)imidazole-4-carboxamide (10-formyl THF route): step 1/1. The protein operates within purine metabolism; IMP biosynthesis via de novo pathway; IMP from 5-formamido-1-(5-phospho-D-ribosyl)imidazole-4-carboxamide: step 1/1. The chain is Bifunctional purine biosynthesis protein PurH from Salmonella typhi.